The primary structure comprises 89 residues: Large ribosomal subunit protein bL27 (89 aa).

The tract at residues 1–22 (MAQKKAGGSSRNGRDSAGRRLG) is disordered.

It belongs to the bacterial ribosomal protein bL27 family.

This is Large ribosomal subunit protein bL27 from Gluconacetobacter diazotrophicus (strain ATCC 49037 / DSM 5601 / CCUG 37298 / CIP 103539 / LMG 7603 / PAl5).